A 273-amino-acid chain; its full sequence is MALKNFNPITPSLRELVQVDKTSLWKGRPLKSLTKGISKTGGRNNQGRITSWHRGGGHKKLYRIIDFKRNKIDISAIVERIEYDPNRTAFIALIKYEDGEYSYILAPQKLSVGDRVISSQDADIKIGNCLPLKFIPTGTTLHNVEMKVGKGGQIARSAGTSVDLVGKDSGYAQIKLRSGEFRLVPLDCKATIGSISNPDQKNINLGKAGRNRWLGWRPHVRGVAMNPVDHPHGGGEGKTSGGRHPVTPWGFPTKGKKTRKNKRTSKFIVKKRK.

Residues Val-228–Lys-273 form a disordered region. Positions Lys-254–Lys-273 are enriched in basic residues.

Belongs to the universal ribosomal protein uL2 family. In terms of assembly, part of the 50S ribosomal subunit. Forms a bridge to the 30S subunit in the 70S ribosome.

Its function is as follows. One of the primary rRNA binding proteins. Required for association of the 30S and 50S subunits to form the 70S ribosome, for tRNA binding and peptide bond formation. It has been suggested to have peptidyltransferase activity; this is somewhat controversial. Makes several contacts with the 16S rRNA in the 70S ribosome. The protein is Large ribosomal subunit protein uL2 of Rickettsia felis (strain ATCC VR-1525 / URRWXCal2) (Rickettsia azadi).